We begin with the raw amino-acid sequence, 275 residues long: Formamidopyrimidine-DNA glycosylase (275 aa).

P2 acts as the Schiff-base intermediate with DNA in catalysis. Catalysis depends on E3, which acts as the Proton donor. The Proton donor; for beta-elimination activity role is filled by K58. Residues H91, R109, and K154 each contribute to the DNA site. The segment at 240-274 (AVYERAGLACRVCGTPIRRLVQGQRATYFCPHCQK) adopts an FPG-type zinc-finger fold. R264 serves as the catalytic Proton donor; for delta-elimination activity.

This sequence belongs to the FPG family. Monomer. Requires Zn(2+) as cofactor.

It carries out the reaction Hydrolysis of DNA containing ring-opened 7-methylguanine residues, releasing 2,6-diamino-4-hydroxy-5-(N-methyl)formamidopyrimidine.. The catalysed reaction is 2'-deoxyribonucleotide-(2'-deoxyribose 5'-phosphate)-2'-deoxyribonucleotide-DNA = a 3'-end 2'-deoxyribonucleotide-(2,3-dehydro-2,3-deoxyribose 5'-phosphate)-DNA + a 5'-end 5'-phospho-2'-deoxyribonucleoside-DNA + H(+). In terms of biological role, involved in base excision repair of DNA damaged by oxidation or by mutagenic agents. Acts as a DNA glycosylase that recognizes and removes damaged bases. Has a preference for oxidized purines, such as 7,8-dihydro-8-oxoguanine (8-oxoG). Has AP (apurinic/apyrimidinic) lyase activity and introduces nicks in the DNA strand. Cleaves the DNA backbone by beta-delta elimination to generate a single-strand break at the site of the removed base with both 3'- and 5'-phosphates. This Bordetella avium (strain 197N) protein is Formamidopyrimidine-DNA glycosylase.